The chain runs to 539 residues: O-phosphoserine--tRNA(Cys) ligase (539 aa).

Residues 188–190 (HMT), 233–235 (SAS), 275–276 (YY), and N327 each bind substrate.

Belongs to the class-II aminoacyl-tRNA synthetase family. O-phosphoseryl-tRNA(Cys) synthetase subfamily. In terms of assembly, homotetramer. Interacts with SepCysS.

It carries out the reaction tRNA(Cys) + O-phospho-L-serine + ATP = O-phospho-L-seryl-tRNA(Cys) + AMP + diphosphate. Its function is as follows. Catalyzes the attachment of O-phosphoserine (Sep) to tRNA(Cys). The chain is O-phosphoserine--tRNA(Cys) ligase from Methanococcoides burtonii (strain DSM 6242 / NBRC 107633 / OCM 468 / ACE-M).